The primary structure comprises 109 residues: Nucleoid-associated protein LBUL_1514 (109 aa).

This sequence belongs to the YbaB/EbfC family. In terms of assembly, homodimer.

It localises to the cytoplasm. It is found in the nucleoid. Binds to DNA and alters its conformation. May be involved in regulation of gene expression, nucleoid organization and DNA protection. The chain is Nucleoid-associated protein LBUL_1514 from Lactobacillus delbrueckii subsp. bulgaricus (strain ATCC BAA-365 / Lb-18).